A 1717-amino-acid chain; its full sequence is DNA-directed RNA polymerase I subunit RPA1 (1717 aa).

Zn(2+) is bound by residues C64, C67, C74, H77, C104, and C107. Residues 110–201 form a clamp region; sequence LTCPRAAIYL…VAQFWKTHMA (92 aa). The Zn(2+) site is built by C205 and C208. Residues 327–433 are clamp; that stretch reads FTNGQTVNLQ…IRQILEKKEG (107 aa). The segment at 410–423 is rudder; the sequence is DSEMDKLMLEKYPG. DNA contacts are provided by K431, R436, and R443. The involved in RRN3 binding to Pol I complex stretch occupies residues 475–549; the sequence is YPQPVTPWNV…QGTKVVCRHV (75 aa). Position 559 (R559) interacts with RNA. Residues D595, D597, and D599 each contribute to the Mg(2+) site. D599 contacts RNA. The interval 812 to 890 is funnel; it reads KPNADVVRQR…NEINKACMPL (79 aa). Residues 967 to 1008 are bridging helix; it reads RPPEFFFHCMAGREGLVDTAVKTSRSGYLQRCIIKHLEGLVI. Residues 1067 to 1162 form a mediates the interaction with TOP2A region; sequence ADPQKVLGHI…SLSVWRPDIY (96 aa). The interval 1214 to 1255 is trigger loop; it reads PGEAVGLLAAQSIGEPSTQMTLNTFHFAGRGEMNVTLGIPRL. R1256 contacts DNA. The disordered stretch occupies residues 1372 to 1493; that stretch reads RNVNSRRATQ…RRHSRPQGAE (122 aa). Residues 1380–1397 are compositionally biased toward basic and acidic residues; the sequence is TQKDLNDTEDSGRSQREE. Residue S1393 is modified to Phosphoserine. Composition is skewed to acidic residues over residues 1398–1419 and 1429–1450; these read ERDE…DADA and EEEV…EVQE. The segment covering 1452–1464 has biased composition (basic and acidic residues); that stretch reads GNIKGDGVHQGHE. Residues 1465-1477 show a composition bias toward acidic residues; it reads PDEEEHLGLEEEE.

Belongs to the RNA polymerase beta' chain family. As to quaternary structure, component of the RNA polymerase I (Pol I) complex consisting of 13 subunits: a ten-subunit catalytic core composed of POLR1A/RPA1, POLR1B/RPA2, POLR1C/RPAC1, POLR1D/RPAC2, POLR1H/RPA12, POLR2E/RPABC1, POLR2F/RPABC2, POLR2H/RPABC3, POLR2K/RPABC4 and POLR2L/RPABC5; a mobile stalk subunit POLR1F/RPA43 protruding from the core and additional subunits homologous to general transcription factors POLR1E/RPA49 and POLR1G/RPA34. Part of Pol I pre-initiation complex (PIC), in which Pol I core assembles with RRN3 and promoter-bound UTBF and SL1/TIF-IB complex. Interacts (via dock II domain) with TOP2A; this interaction may assist Pol I transcription initiation by releasing supercoils occurring during DNA unwinding. Interacts with CAVIN1; this interaction induces the dissociation of Pol I complex paused at rDNA terminator sequences. Interacts with MYO1C. Interacts with ERBB2. Interacts with DDX11. Interacts with RECQL5. Requires Mg(2+) as cofactor. Phosphorylated.

The protein localises to the nucleus. Its subcellular location is the nucleolus. It is found in the chromosome. The catalysed reaction is RNA(n) + a ribonucleoside 5'-triphosphate = RNA(n+1) + diphosphate. Catalytic core component of RNA polymerase I (Pol I), a DNA-dependent RNA polymerase which synthesizes ribosomal RNA precursors using the four ribonucleoside triphosphates as substrates. Transcribes 47S pre-rRNAs from multicopy rRNA gene clusters, giving rise to 5.8S, 18S and 28S ribosomal RNAs. Pol I-mediated transcription cycle proceeds through transcription initiation, transcription elongation and transcription termination stages. During transcription initiation, Pol I pre-initiation complex (PIC) is recruited by the selectivity factor 1 (SL1/TIF-IB) complex bound to the core promoter that precedes an rDNA repeat unit. The PIC assembly bends the promoter favoring the formation of the transcription bubble and promoter escape. Once the polymerase has escaped from the promoter it enters the elongation phase during which RNA is actively polymerized, based on complementarity with the template DNA strand. Highly processive, assembles in structures referred to as 'Miller trees' where many elongating Pol I complexes queue and transcribe the same rDNA coding regions. At terminator sequences downstream of the rDNA gene, PTRF interacts with Pol I and halts Pol I transcription leading to the release of the RNA transcript and polymerase from the DNA. Forms Pol I active center together with the second largest subunit POLR1B/RPA2. Appends one nucleotide at a time to the 3' end of the nascent RNA, with POLR1A/RPA1 contributing a Mg(2+)-coordinating DxDGD motif, and POLR1B/RPA2 participating in the coordination of a second Mg(2+) ion and providing lysine residues believed to facilitate Watson-Crick base pairing between the incoming nucleotide and the template base. Typically, Mg(2+) ions direct a 5' nucleoside triphosphate to form a phosphodiester bond with the 3' hydroxyl of the preceding nucleotide of the nascent RNA, with the elimination of pyrophosphate. Has proofreading activity: Pauses and backtracks to allow the cleavage of a missincorporated nucleotide via POLR1H/RPA12. High Pol I processivity is associated with decreased transcription fidelity. The sequence is that of DNA-directed RNA polymerase I subunit RPA1 from Mus musculus (Mouse).